A 243-amino-acid chain; its full sequence is Peptidyl-tRNA hydrolase (243 aa).

Tyr14 is a tRNA binding site. The active-site Proton acceptor is the His19. 3 residues coordinate tRNA: Phe64, Asn66, and Asn112. Positions 188–243 are disordered; the sequence is GGKAEEEKPRKDNKTTEKKPAGQSHIHQARNHNQPKVLTTGPMADILKKMFGNKGE. The segment covering 190 to 207 has biased composition (basic and acidic residues); sequence KAEEEKPRKDNKTTEKKP.

This sequence belongs to the PTH family. In terms of assembly, monomer.

It is found in the cytoplasm. The catalysed reaction is an N-acyl-L-alpha-aminoacyl-tRNA + H2O = an N-acyl-L-amino acid + a tRNA + H(+). Hydrolyzes ribosome-free peptidyl-tRNAs (with 1 or more amino acids incorporated), which drop off the ribosome during protein synthesis, or as a result of ribosome stalling. Functionally, catalyzes the release of premature peptidyl moieties from peptidyl-tRNA molecules trapped in stalled 50S ribosomal subunits, and thus maintains levels of free tRNAs and 50S ribosomes. This is Peptidyl-tRNA hydrolase from Rhizobium leguminosarum bv. trifolii (strain WSM2304).